The following is a 185-amino-acid chain: Peptidyl-tRNA hydrolase (185 aa).

F12 is a tRNA binding site. H17 (proton acceptor) is an active-site residue. The tRNA site is built by Y61, N63, and N109.

This sequence belongs to the PTH family. In terms of assembly, monomer.

It localises to the cytoplasm. It carries out the reaction an N-acyl-L-alpha-aminoacyl-tRNA + H2O = an N-acyl-L-amino acid + a tRNA + H(+). Functionally, hydrolyzes ribosome-free peptidyl-tRNAs (with 1 or more amino acids incorporated), which drop off the ribosome during protein synthesis, or as a result of ribosome stalling. Catalyzes the release of premature peptidyl moieties from peptidyl-tRNA molecules trapped in stalled 50S ribosomal subunits, and thus maintains levels of free tRNAs and 50S ribosomes. This Borrelia garinii subsp. bavariensis (strain ATCC BAA-2496 / DSM 23469 / PBi) (Borreliella bavariensis) protein is Peptidyl-tRNA hydrolase.